Reading from the N-terminus, the 1116-residue chain is Angiopoietin-1 receptor (1116 aa).

The signal sequence occupies residues 1–21 (MCLLDSCTALLLLGCWMSGSA). Residues 22-745 (VRISDVTLVN…FAAHGHLLLY (724 aa)) are Extracellular-facing. A disulfide bridge connects residues Cys-46 and Cys-106. The Ig-like C2-type 1 domain maps to 46–126 (CVSSDWSSGG…YTYKMLQEAA (81 aa)). N-linked (GlcNAc...) asparagine glycans are attached at residues Asn-110, Asn-143, and Asn-223. EGF-like domains follow at residues 214–256 (SCRA…HTCD), 258–302 (VCGE…LSCN), and 304–342 (ACPD…SRCE). 12 disulfide bridges follow: Cys-215-Cys-224, Cys-228-Cys-237, Cys-231-Cys-244, Cys-246-Cys-255, Cys-259-Cys-268, Cys-272-Cys-277, Cys-283-Cys-290, Cys-292-Cys-301, Cys-305-Cys-314, Cys-318-Cys-325, Cys-320-Cys-331, and Cys-333-Cys-341. The Ig-like C2-type 2 domain maps to 348–438 (PVISHLRDVE…MQVEDEFTVE (91 aa)). 3 N-linked (GlcNAc...) asparagine glycosylation sites follow: Asn-367, Asn-387, and Asn-425. A disulfide bridge connects residues Cys-368 and Cys-422. 3 Fibronectin type-III domains span residues 444–538 (RPQN…TQVL), 540–633 (LPVG…QLPP), and 634–729 (PPAN…TLPQ). N-linked (GlcNAc...) asparagine glycosylation is found at Asn-590, Asn-637, and Asn-642. Residues 746-766 (AILGSAGMTCCTVLLAFCIVL) form a helical membrane-spanning segment. The Cytoplasmic segment spans residues 767–1116 (QLKRNTLQRR…GIDCSAEEAG (350 aa)). One can recognise a Protein kinase domain in the interval 816 to 1095 (IQFQDVLGEG…RMLEERKTYV (280 aa)). Residues 822–830 (LGEGNFGQV) and Lys-847 each bind ATP. Residue Tyr-852 is modified to Phosphotyrosine; by autocatalysis. Residue Asp-956 is the Proton acceptor of the active site. Phosphotyrosine; by autocatalysis is present on residues Tyr-984, Tyr-1094, and Tyr-1100.

This sequence belongs to the protein kinase superfamily. Tyr protein kinase family. Tie subfamily. Interacts with svep1. In terms of processing, autophosphorylated on tyrosine residues in response to ligand binding. Autophosphorylation occurs in trans, i.e. one subunit of the dimeric receptor phosphorylates tyrosine residues on the other subunit. Autophosphorylation occurs in a sequential manner, where Tyr-984 in the kinase activation loop is phosphorylated first, followed by autophosphorylation at additional tyrosine residues. Phosphorylation is important for interaction with scaffold proteins and effectors.

It is found in the cell membrane. It localises to the cell junction. Its subcellular location is the focal adhesion. The protein localises to the cytoplasm. The protein resides in the cytoskeleton. It carries out the reaction L-tyrosyl-[protein] + ATP = O-phospho-L-tyrosyl-[protein] + ADP + H(+). Angiopoietin binding leads to receptor dimerization and activation by autophosphorylation at Tyr-984 on the kinase activation loop. Functionally, tyrosine-protein kinase that acts as a cell-surface receptor for angiopoietins and regulates angiogenesis, endothelial cell survival, proliferation, migration, adhesion and cell spreading, reorganization of the actin cytoskeleton, but also maintenance of vascular quiescence. Can activate or inhibit angiogenesis, depending on the context. Angiopoietin signaling triggers receptor dimerization and autophosphorylation at specific tyrosine residues that then serve as binding sites for scaffold proteins and effectors. This chain is Angiopoietin-1 receptor, found in Danio rerio (Zebrafish).